Reading from the N-terminus, the 1511-residue chain is Pleiotropic ABC efflux transporter of multiple drugs (1511 aa).

Polar residues predominate over residues 1–14; it reads MPEAKLNNNVNDVT. The tract at residues 1–32 is disordered; that stretch reads MPEAKLNNNVNDVTSYSSASSSTENAADLHNY. Over 1 to 517 the chain is Cytoplasmic; the sequence is MPEAKLNNNV…LLIRNMWRLR (517 aa). At Ser22 the chain carries Phosphoserine. A phosphothreonine mark is found at Thr49 and Thr51. Positions 52-71 are disordered; sequence AQSMQNSTQSAPNKSDAQSI. Phosphoserine occurs at positions 54, 58, and 61. Residues 161–410 enclose the ABC transporter 1 domain; the sequence is LRKFQRSKET…FEDMGYVCPS (250 aa). A helical membrane pass occupies residues 518–542; that stretch reads NNIGFTLFMILGNCSMALILGSMFF. Over 543–558 the chain is Extracellular; the sequence is KIMKKGDTSTFYFRGS. A helical membrane pass occupies residues 559–579; it reads AMFFAILFNAFSSLLEIFSLY. At 580–611 the chain is on the cytoplasmic side; that stretch reads EARPITEKHRTYSLYHPSADAFASVLSEIPSK. A helical membrane pass occupies residues 612 to 628; it reads LIIAVCFNIIFYFLVDF. The Extracellular portion of the chain corresponds to 629-631; the sequence is RRN. A helical transmembrane segment spans residues 632 to 650; sequence GGVFFFYLLINIVAVFSMS. Residues 651–665 are Cytoplasmic-facing; sequence HLFRCVGSLTKTLSE. Residues 666 to 685 traverse the membrane as a helical segment; the sequence is AMVPASMLLLALSMYTGFAI. Over 686 to 774 the chain is Extracellular; that stretch reads PKKKILRWSK…QYYHKDKWRG (89 aa). The N-linked (GlcNAc...) asparagine glycan is linked to Asn734. A helical transmembrane segment spans residues 775 to 793; the sequence is FGIGMAYVVFFFFVYLFLC. At 794–1237 the chain is on the cytoplasmic side; it reads EYNEGAKQKG…GTSLQGLQNQ (444 aa). Residues 824 to 858 are disordered; that stretch reads EKNANDPENVGERSDLSSDRKMLQESSEEESDTYG. Lys825 participates in a covalent cross-link: Glycyl lysine isopeptide (Lys-Gly) (interchain with G-Cter in ubiquitin). The span at 833–846 shows a compositional bias: basic and acidic residues; the sequence is VGERSDLSSDRKML. A phosphoserine mark is found at Ser837, Ser840, Ser841, Ser849, Ser850, and Ser854. The 244-residue stretch at 869 to 1112 folds into the ABC transporter 2 domain; sequence FHWRNLCYEV…MIDYFESHGA (244 aa). 905–912 is an ATP binding site; it reads GASGAGKT. Residues 1238 to 1260 form a helical membrane-spanning segment; that stretch reads MLAVFMFTVIFNPILQQYLPSFV. The Extracellular portion of the chain corresponds to 1261–1291; it reads QQRDLYEARERPSRTFSWISFIFAQIFVEVP. Residues 1292–1313 traverse the membrane as a helical segment; sequence WNILAGTIAYFIYYYPIGFYSN. The Cytoplasmic segment spans residues 1314–1324; that stretch reads ASAAGQLHERG. The chain crosses the membrane as a helical span at residues 1325–1349; sequence ALFWLFSCAFYVYVGSMGLLVISFN. The Extracellular segment spans residues 1350 to 1354; the sequence is QVAES. A helical membrane pass occupies residues 1355-1379; the sequence is AANLASLLFTMSLSFCGVMTTPSAM. Topologically, residues 1380–1388 are cytoplasmic; the sequence is PRFWIFMYR. The helical transmembrane segment at 1389–1407 threads the bilayer; it reads VSPLTYFIQALLAVGVANV. Over 1408-1476 the chain is Extracellular; the sequence is DVKCADYELL…VNSFYSERWR (69 aa). Asn1447 is a glycosylation site (N-linked (GlcNAc...) asparagine). A helical membrane pass occupies residues 1477 to 1499; it reads NYGIFICYIAFNYIAGVFFYWLA. Topologically, residues 1500–1511 are cytoplasmic; that stretch reads RVPKKNGKLSKK.

Belongs to the ABC transporter superfamily. ABCG family. PDR (TC 3.A.1.205) subfamily. In terms of processing, ubiquitinylation mediates endocytosis and vacuolar degradation. Phosphorylation by casein kinase I stabilizes the protein half-life.

It is found in the cell membrane. FK506, isonitrile, enniatin, RU49953, kitasatospora E420, staurosporine CGP42700, prenyl-flavonoids, D-octapeptides were found to be inhibitors in vivo. Vanadate and oligomycin were found to be inhibitors in vitro. Functionally, active efflux of weakly charged organic compounds of 90 cubic Angstroms to 300 cubic Angstroms surface volume. Confers resistance to numerous chemicals including cycloheximide, sulfomethuron methyl, steroids, antiseptics, antibiotics, anticancer, herbicides, mycotoxins, insecticides, ionophores, alkaloids, flavonoids, phenothiazines, organotin compounds, carbazoles, lysosomotropic aminoesters, detergents, rhodamines and other fluorophores, azoles and other antifungals. Exhibits nucleoside triphosphatase activity. The chain is Pleiotropic ABC efflux transporter of multiple drugs (PDR5) from Saccharomyces cerevisiae (strain ATCC 204508 / S288c) (Baker's yeast).